Consider the following 485-residue polypeptide: Adenosylhomocysteinase (485 aa).

3 residues coordinate substrate: Thr-60, Asp-146, and Glu-208. 209-211 (TTT) is a binding site for NAD(+). 2 residues coordinate substrate: Lys-238 and Asp-242. NAD(+) contacts are provided by residues Asn-243, 272–277 (GYGDVG), Glu-295, Asn-330, 351–353 (IGH), and Asn-399.

Belongs to the adenosylhomocysteinase family. NAD(+) serves as cofactor.

The protein localises to the cytoplasm. It carries out the reaction S-adenosyl-L-homocysteine + H2O = L-homocysteine + adenosine. Its pathway is amino-acid biosynthesis; L-homocysteine biosynthesis; L-homocysteine from S-adenosyl-L-homocysteine: step 1/1. Its function is as follows. May play a key role in the regulation of the intracellular concentration of adenosylhomocysteine. In Streptomyces avermitilis (strain ATCC 31267 / DSM 46492 / JCM 5070 / NBRC 14893 / NCIMB 12804 / NRRL 8165 / MA-4680), this protein is Adenosylhomocysteinase.